The following is a 622-amino-acid chain: 1-deoxy-D-xylulose-5-phosphate synthase (622 aa).

Residues H80 and 121–123 each bind thiamine diphosphate; that span reads GHS. D152 is a Mg(2+) binding site. Residues 153 to 154, N181, Y288, and E370 contribute to the thiamine diphosphate site; that span reads GA. N181 contacts Mg(2+).

Belongs to the transketolase family. DXPS subfamily. In terms of assembly, homodimer. The cofactor is Mg(2+). It depends on thiamine diphosphate as a cofactor.

The enzyme catalyses D-glyceraldehyde 3-phosphate + pyruvate + H(+) = 1-deoxy-D-xylulose 5-phosphate + CO2. It participates in metabolic intermediate biosynthesis; 1-deoxy-D-xylulose 5-phosphate biosynthesis; 1-deoxy-D-xylulose 5-phosphate from D-glyceraldehyde 3-phosphate and pyruvate: step 1/1. Its function is as follows. Catalyzes the acyloin condensation reaction between C atoms 2 and 3 of pyruvate and glyceraldehyde 3-phosphate to yield 1-deoxy-D-xylulose-5-phosphate (DXP). This chain is 1-deoxy-D-xylulose-5-phosphate synthase, found in Shewanella denitrificans (strain OS217 / ATCC BAA-1090 / DSM 15013).